The primary structure comprises 540 residues: Beta-glucosidase 1B (540 aa).

Substrate is bound by residues glutamine 25, histidine 128, and asparagine 174. Glutamate 175 acts as the Proton donor in catalysis. Residue tyrosine 316 participates in substrate binding. Glutamate 380 serves as the catalytic Nucleophile. Substrate-binding positions include tryptophan 430 and 437–438 (EW). The segment covering 481-492 (PAAETKKAATPS) has biased composition (low complexity). Residues 481–524 (PAAETKKAATPSPLKPHGAISNGVSKKSSATKEPKSASRKKGRK) form a disordered region.

It belongs to the glycosyl hydrolase 1 family.

It carries out the reaction Hydrolysis of terminal, non-reducing beta-D-glucosyl residues with release of beta-D-glucose.. Functionally, plays an important role in cellulose degradation. Shows hydrolytic activity against several glycosidic compounds. This Phanerodontia chrysosporium (White-rot fungus) protein is Beta-glucosidase 1B.